The following is an 87-amino-acid chain: NADH-ubiquinone oxidoreductase chain 4L (87 aa).

3 helical membrane passes run 1 to 21, 22 to 42, and 57 to 77; these read MNLS…NRKN, IILM…LVLI, and LYII…LVAF.

This sequence belongs to the complex I subunit 4L family. In terms of assembly, core subunit of respiratory chain NADH dehydrogenase (Complex I) which is composed of 45 different subunits.

It is found in the mitochondrion inner membrane. It carries out the reaction a ubiquinone + NADH + 5 H(+)(in) = a ubiquinol + NAD(+) + 4 H(+)(out). Its function is as follows. Core subunit of the mitochondrial membrane respiratory chain NADH dehydrogenase (Complex I) which catalyzes electron transfer from NADH through the respiratory chain, using ubiquinone as an electron acceptor. The sequence is that of NADH-ubiquinone oxidoreductase chain 4L (ND4L) from Moniliophthora perniciosa (strain FA553 / isolate CP02) (Witches'-broom disease fungus).